The primary structure comprises 441 residues: GTPase Der (441 aa).

EngA-type G domains lie at 3–167 and 176–351; these read PLIA…PNKT and TRIA…EQFA. GTP contacts are provided by residues 9-16, 56-60, 119-122, 182-189, 229-233, and 294-297; these read GRPNVGKS, DTGGF, NKID, DTAGI, and NKWD. A KH-like domain is found at 352–436; it reads KRISTSDLNR…PMRLLFKGRE (85 aa).

This sequence belongs to the TRAFAC class TrmE-Era-EngA-EngB-Septin-like GTPase superfamily. EngA (Der) GTPase family. Associates with the 50S ribosomal subunit.

Its function is as follows. GTPase that plays an essential role in the late steps of ribosome biogenesis. The polypeptide is GTPase Der (Geotalea daltonii (strain DSM 22248 / JCM 15807 / FRC-32) (Geobacter daltonii)).